We begin with the raw amino-acid sequence, 299 residues long: 4-hydroxybenzoate octaprenyltransferase (299 aa).

8 helical membrane-spanning segments follow: residues V33 to V53, W56 to I76, L107 to L127, L151 to I171, W180 to V200, A214 to F234, H247 to A267, and A278 to T298.

This sequence belongs to the UbiA prenyltransferase family. The cofactor is Mg(2+).

Its subcellular location is the cell inner membrane. The enzyme catalyses all-trans-octaprenyl diphosphate + 4-hydroxybenzoate = 4-hydroxy-3-(all-trans-octaprenyl)benzoate + diphosphate. It functions in the pathway cofactor biosynthesis; ubiquinone biosynthesis. Catalyzes the prenylation of para-hydroxybenzoate (PHB) with an all-trans polyprenyl group. Mediates the second step in the final reaction sequence of ubiquinone-8 (UQ-8) biosynthesis, which is the condensation of the polyisoprenoid side chain with PHB, generating the first membrane-bound Q intermediate 3-octaprenyl-4-hydroxybenzoate. In Xylella fastidiosa (strain 9a5c), this protein is 4-hydroxybenzoate octaprenyltransferase.